The following is a 307-amino-acid chain: Beta-lactamase (307 aa).

A signal peptide (tat-type signal) is located at residues 1–34 (MRNRGFGRRELLVAMAMLVSVTGCARHASGARPA). Residue Ser-84 is the Acyl-ester intermediate of the active site. A substrate-binding site is contributed by Ser-142. Glu-182 acts as the Proton acceptor in catalysis. A substrate-binding site is contributed by 251 to 253 (TGT).

It belongs to the class-A beta-lactamase family. As to quaternary structure, monomer. Exported by the Tat system. The position of the signal peptide cleavage has not been experimentally proven.

Its subcellular location is the periplasm. It is found in the secreted. It catalyses the reaction a beta-lactam + H2O = a substituted beta-amino acid. With respect to regulation, is inhibited by clavulanate. Its function is as follows. Extended spectrum beta-lactamase (ESBL) that inactivates beta-lactam antibiotics by hydrolyzing the amide group of the beta-lactam ring. Displays high levels of penicillinase and cephalosporinase activity as well as measurable activity with carbapenems, including imipenem and meropenem. Plays a primary role in the intrinsic resistance of mycobacteria to beta-lactam antibiotics. The sequence is that of Beta-lactamase (blaC) from Mycobacterium bovis (strain ATCC BAA-935 / AF2122/97).